Consider the following 268-residue polypeptide: Tryptophan synthase alpha chain (268 aa).

Catalysis depends on proton acceptor residues Glu49 and Asp60.

Belongs to the TrpA family. Tetramer of two alpha and two beta chains.

The enzyme catalyses (1S,2R)-1-C-(indol-3-yl)glycerol 3-phosphate + L-serine = D-glyceraldehyde 3-phosphate + L-tryptophan + H2O. The protein operates within amino-acid biosynthesis; L-tryptophan biosynthesis; L-tryptophan from chorismate: step 5/5. In terms of biological role, the alpha subunit is responsible for the aldol cleavage of indoleglycerol phosphate to indole and glyceraldehyde 3-phosphate. This Escherichia fergusonii (strain ATCC 35469 / DSM 13698 / CCUG 18766 / IAM 14443 / JCM 21226 / LMG 7866 / NBRC 102419 / NCTC 12128 / CDC 0568-73) protein is Tryptophan synthase alpha chain.